The chain runs to 312 residues: Porphobilinogen deaminase (312 aa).

S-(dipyrrolylmethanemethyl)cysteine is present on Cys241.

Belongs to the HMBS family. As to quaternary structure, monomer. Dipyrromethane serves as cofactor.

It catalyses the reaction 4 porphobilinogen + H2O = hydroxymethylbilane + 4 NH4(+). The protein operates within porphyrin-containing compound metabolism; protoporphyrin-IX biosynthesis; coproporphyrinogen-III from 5-aminolevulinate: step 2/4. In terms of biological role, tetrapolymerization of the monopyrrole PBG into the hydroxymethylbilane pre-uroporphyrinogen in several discrete steps. The chain is Porphobilinogen deaminase from Pelotomaculum thermopropionicum (strain DSM 13744 / JCM 10971 / SI).